Here is a 145-residue protein sequence, read N- to C-terminus: uncharacterized protein (145 aa).

2 disordered regions span residues 1-41 (MRRL…PPGT) and 122-145 (RLPS…PLAL). Positions 20–34 (GGPQNGTSGCTTAPQ) are enriched in polar residues. Basic and acidic residues predominate over residues 134–145 (DSQHPREVPLAL).

As to expression, ubiquitous.

This is an uncharacterized protein from Homo sapiens (Human).